The following is a 461-amino-acid chain: ATP-dependent protease ATPase subunit HslU (461 aa).

Residues Ile18, 60–65 (GVGKTE), Asp274, Glu339, and Arg411 contribute to the ATP site.

The protein belongs to the ClpX chaperone family. HslU subfamily. In terms of assembly, a double ring-shaped homohexamer of HslV is capped on each side by a ring-shaped HslU homohexamer. The assembly of the HslU/HslV complex is dependent on binding of ATP.

Its subcellular location is the cytoplasm. ATPase subunit of a proteasome-like degradation complex; this subunit has chaperone activity. The binding of ATP and its subsequent hydrolysis by HslU are essential for unfolding of protein substrates subsequently hydrolyzed by HslV. HslU recognizes the N-terminal part of its protein substrates and unfolds these before they are guided to HslV for hydrolysis. This chain is ATP-dependent protease ATPase subunit HslU, found in Carboxydothermus hydrogenoformans (strain ATCC BAA-161 / DSM 6008 / Z-2901).